A 204-amino-acid chain; its full sequence is Holliday junction branch migration complex subunit RuvA (204 aa).

The domain I stretch occupies residues 1 to 64; it reads MIGRLRGILL…EDAQLLYGFN (64 aa). Residues 65-143 form a domain II region; that stretch reads TVKERALFRE…GWSAGDLFTP (79 aa). The segment at 144–155 is flexible linker; sequence FTDAAPVDSGST. The tract at residues 156–204 is domain III; that stretch reads SSNSAEEEAVSALLALGYKPVQASKVVSQIAKPDMTSEQLIREALKSMV.

The protein belongs to the RuvA family. Homotetramer. Forms an RuvA(8)-RuvB(12)-Holliday junction (HJ) complex. HJ DNA is sandwiched between 2 RuvA tetramers; dsDNA enters through RuvA and exits via RuvB. An RuvB hexamer assembles on each DNA strand where it exits the tetramer. Each RuvB hexamer is contacted by two RuvA subunits (via domain III) on 2 adjacent RuvB subunits; this complex drives branch migration. In the full resolvosome a probable DNA-RuvA(4)-RuvB(12)-RuvC(2) complex forms which resolves the HJ.

Its subcellular location is the cytoplasm. The RuvA-RuvB-RuvC complex processes Holliday junction (HJ) DNA during genetic recombination and DNA repair, while the RuvA-RuvB complex plays an important role in the rescue of blocked DNA replication forks via replication fork reversal (RFR). RuvA specifically binds to HJ cruciform DNA, conferring on it an open structure. The RuvB hexamer acts as an ATP-dependent pump, pulling dsDNA into and through the RuvAB complex. HJ branch migration allows RuvC to scan DNA until it finds its consensus sequence, where it cleaves and resolves the cruciform DNA. This Vibrio vulnificus (strain CMCP6) protein is Holliday junction branch migration complex subunit RuvA.